A 427-amino-acid chain; its full sequence is MHDIDFIKNNPELFDEAMQNRNFGKIAHKIIELSANKKHTLTQLYSLQKERNNITQEIEKLKKDNIQCDTQIELSKEITKKINHINNMIKTDSELIDLLNILPNIPDKKVPIGKDENDNIEIRRYGKKVDFKFPPKTHYELGENLNLMDFKQAAKLSGSRFVILKSQLAQLDRALANFMLDVHTQEFGYSEISHPVLVHESAMYGVGQLPKFADDSFKTTDNFRLIPTSEVALTNLVSNTNTNANELPIRLTACSQCFRSEAGSAGKDVRGMMRQHQFNKVELVSIVTEEQSELELERMTQVAEEILKKLELPYRVMMLCTGDLGFSASITYDIEVWIPSQNQYREISSCSNCKAFQARRMNAKYHTISNGNKVNKFVHTLNGSALAIGRTIIAILENYQNQDGSITIPHVLRKYMNNQDIIKNNNY.

An L-serine-binding site is contributed by 228 to 230; that stretch reads TSE. 259–261 serves as a coordination point for ATP; the sequence is RSE. Glu-282 is an L-serine binding site. 346–349 contributes to the ATP binding site; the sequence is EISS. Position 384 (Ser-384) interacts with L-serine.

It belongs to the class-II aminoacyl-tRNA synthetase family. Type-1 seryl-tRNA synthetase subfamily. In terms of assembly, homodimer. The tRNA molecule binds across the dimer.

The protein resides in the cytoplasm. It carries out the reaction tRNA(Ser) + L-serine + ATP = L-seryl-tRNA(Ser) + AMP + diphosphate + H(+). The catalysed reaction is tRNA(Sec) + L-serine + ATP = L-seryl-tRNA(Sec) + AMP + diphosphate + H(+). The protein operates within aminoacyl-tRNA biosynthesis; selenocysteinyl-tRNA(Sec) biosynthesis; L-seryl-tRNA(Sec) from L-serine and tRNA(Sec): step 1/1. Catalyzes the attachment of serine to tRNA(Ser). Is also able to aminoacylate tRNA(Sec) with serine, to form the misacylated tRNA L-seryl-tRNA(Sec), which will be further converted into selenocysteinyl-tRNA(Sec). This is Serine--tRNA ligase from Ehrlichia ruminantium (strain Welgevonden).